We begin with the raw amino-acid sequence, 191 residues long: Cell division protein SepF (191 aa).

Low complexity predominate over residues 151 to 164 (SSSPEEASPSSVST). A disordered region spans residues 151–191 (SSSPEEASPSSVSTEKTPQYSLGKNTTPEPAWGNSKLSAYS). Positions 165–178 (EKTPQYSLGKNTTP) are enriched in polar residues.

Belongs to the SepF family. Homodimer. Interacts with FtsZ.

It localises to the cytoplasm. Cell division protein that is part of the divisome complex and is recruited early to the Z-ring. Probably stimulates Z-ring formation, perhaps through the cross-linking of FtsZ protofilaments. Its function overlaps with FtsA. The sequence is that of Cell division protein SepF from Prochlorococcus marinus (strain MIT 9301).